A 233-amino-acid chain; its full sequence is uncharacterized protein (233 aa).

The Zn(2+) site is built by His-64, His-66, Asp-68, His-69, His-143, Asp-162, and His-212.

This sequence belongs to the metallo-beta-lactamase superfamily. Glyoxalase II family. Zn(2+) serves as cofactor.

This is an uncharacterized protein from Bacillus subtilis (strain 168).